Consider the following 373-residue polypeptide: Capsular polysaccharide phosphotransferase (373 aa).

Belongs to the stealth family.

Part of a capsule gene locus. Expression was not detected under standard growth conditions. The polypeptide is Capsular polysaccharide phosphotransferase (Neisseria meningitidis serogroup B).